The following is a 379-amino-acid chain: MIISASTDYRAAAERRLPPFLFHYIDGGAYAEHTLKRNVSDLSDIALRQRILRNMSDLSLETELFGETLAMPVALAPVGLTGMYARRGEVQAARAADSRGIPFTLSTVSVCPIEEVAPAIQRPMWFQLYVLRDRGFMRNALERAQAAGVTTLVFTVDMPVPGARYRDAHSGMSGPNASLRRIGQAITHPHWAWDVGLFGRPHDLGNISTYRGNPTGLEDYIGWLGSNFDPSISWKDLEWIREFWKGPMVIKGILDPDDARDAVRFGADGIVVSNHGGRQLDGVLSTARALPAIADAVQGDLKILADSGIRTGLDVVRMLALGADTVLLGRAFVYALAAQGEAGVANLLDLIAKEMRVAMTLTGARRIADIGRDSLVSLP.

Residues 1–379 (MIISASTDYR…IGRDSLVSLP (379 aa)) enclose the FMN hydroxy acid dehydrogenase domain. Tyr24 contributes to the substrate binding site. Residues Ser106 and Gln127 each contribute to the FMN site. Tyr129 contributes to the substrate binding site. An FMN-binding site is contributed by Thr155. Arg164 serves as a coordination point for substrate. Lys251 lines the FMN pocket. His275 acts as the Proton acceptor in catalysis. Position 278 (Arg278) interacts with substrate. Position 306 to 330 (306 to 330 (DSGIRTGLDVVRMLALGADTVLLGR)) interacts with FMN.

The protein belongs to the FMN-dependent alpha-hydroxy acid dehydrogenase family. FMN serves as cofactor.

The protein localises to the cell inner membrane. The enzyme catalyses (S)-lactate + A = pyruvate + AH2. Functionally, catalyzes the conversion of L-lactate to pyruvate. Is coupled to the respiratory chain. The chain is L-lactate dehydrogenase from Stenotrophomonas maltophilia (strain K279a).